Consider the following 308-residue polypeptide: Polyketide transferase claH (308 aa).

The interval 50–280 (SDIAVYFSQQ…RVEVAAGKSH (231 aa)) is abhydrolase domain.

It belongs to the polyketide transferase af380 family.

It functions in the pathway secondary metabolite biosynthesis. Functionally, polyketide transferase; part of the cla gene cluster that produces clavatol and ortho-quinone methide. The clavatol biosynthesis cluster cla and the terrestric acid cluster tra are both involved in the production of peniphenones and penilactones. The non-reducing PKS claF is responsible for the formation of clavatol from successive condensations of 3 malonyl-CoA units, presumably with a simple acetyl-CoA starter unit, and 2 methylation steps. The esterase claE probably collaborates with claF by catalyzing the hydrolysis of ACP-bound acyl intermediates to free the ACP from stalled intermediates. The clavatol oxidase claD then converts clavatol to hydroxyclavatol. Spontaneous dehydration of hydroxyclavatol leads to the accumulation of the highly active ortho-quinone methide. On the other hand, the PKS-NRPS hybrid traA is involved in the formation of crustosic acid, with the help of traB and traD. The polyketide synthase module (PKS) of traA is responsible for the synthesis of the polyketide backbone via the condensation of an acetyl-CoA starter unit with 3 malonyl-CoA units. The downstream nonribosomal peptide synthetase (NRPS) module then amidates the carboxyl end of the polyketide with L-malic acid. Because traA lacks a designated enoylreductase (ER) domain, the required activity is provided the enoyl reductase traG. Crustosic acid undergoes decarboxylation and isomerization to the terrestric acid, catalyzed by the 2-oxoglutarate-dependent dioxygenase traH. Both acids are further converted to the 2 gamma-butyrolactones (R)-5-methyltetronic acid and (S)-5-carboxylmethyltetronic acid, with involvement of the cytochrome P450 monooxygenase claJ. Spontaneous addition of the methide to these gamma-butyrolactones leads to peniphenone D and penilactone D, which undergo again stereospecific attacking by methide to give penilactones A and B. The function of the polyketide transferase claH has not been investigated yet. The chain is Polyketide transferase claH from Penicillium crustosum (Blue mold fungus).